The chain runs to 81 residues: Albumin-1 (81 aa).

The propeptide occupies 27–34; sequence LSSVAKMI.

In terms of processing, three disulfide bonds are probably present. The C-terminal glycine may be removed from A1b.

Its function is as follows. A1b binds to basic 7S globulin (BG) and stimulates its phosphorylation activity. This is Albumin-1 (LEG1) from Lupinus angustifolius (Narrow-leaved blue lupine).